We begin with the raw amino-acid sequence, 612 residues long: Kelch-like protein 40a (612 aa).

The BTB domain maps to 34–101; the sequence is VDCILKIKDK…IYTSDINLTE (68 aa). The BACK domain occupies 136-238; the sequence is CLAIFRLGLL…PTSYFKEKVE (103 aa). Positions 266-275 are enriched in basic residues; sequence RVKRSSHRKE. The disordered stretch occupies residues 266 to 290; that stretch reads RVKRSSHRKEGKSAEFESDDDDEDG. The segment covering 281 to 290 has biased composition (acidic residues); sequence FESDDDDEDG. Kelch repeat units lie at residues 350–402, 403–452, 453–500, 502–547, and 549–604; these read QIFV…EAEN, SIYV…SHKG, LVYV…VHKN, IYVV…ELGG, and LYAI…GVRL.

Belongs to the KLHL40 family. As to quaternary structure, component of the BCR(KLHL40) E3 ubiquitin ligase complex. Expressed in skeletal muscle and heart. Detected, although at much lower levels, in brain, eye and fin.

It localises to the cytoplasm. The protein resides in the myofibril. The protein localises to the sarcomere. It is found in the a band. Its subcellular location is the i band. Its function is as follows. Substrate-specific adapter of a BCR (BTB-CUL3-RBX1) E3 ubiquitin ligase complex. Required for skeletal muscle development. This is Kelch-like protein 40a (klhl40a) from Danio rerio (Zebrafish).